The following is a 397-amino-acid chain: Succinate--CoA ligase [ADP-forming] subunit beta (397 aa).

One can recognise an ATP-grasp domain in the interval 9–254 (KELLRGYGAP…TSEEDEKEIE (246 aa)). Residues lysine 46, 53–55 (GRG), glutamate 109, alanine 112, and glutamate 117 contribute to the ATP site. Asparagine 209 and aspartate 223 together coordinate Mg(2+). Substrate is bound by residues asparagine 274 and 331–333 (GIM).

The protein belongs to the succinate/malate CoA ligase beta subunit family. Heterotetramer of two alpha and two beta subunits. Mg(2+) is required as a cofactor.

The enzyme catalyses succinate + ATP + CoA = succinyl-CoA + ADP + phosphate. The catalysed reaction is GTP + succinate + CoA = succinyl-CoA + GDP + phosphate. It participates in carbohydrate metabolism; tricarboxylic acid cycle; succinate from succinyl-CoA (ligase route): step 1/1. Succinyl-CoA synthetase functions in the citric acid cycle (TCA), coupling the hydrolysis of succinyl-CoA to the synthesis of either ATP or GTP and thus represents the only step of substrate-level phosphorylation in the TCA. The beta subunit provides nucleotide specificity of the enzyme and binds the substrate succinate, while the binding sites for coenzyme A and phosphate are found in the alpha subunit. This is Succinate--CoA ligase [ADP-forming] subunit beta from Chelativorans sp. (strain BNC1).